We begin with the raw amino-acid sequence, 266 residues long: Putative pyruvate, phosphate dikinase regulatory protein (266 aa).

149-156 (GVSRTSKT) is an ADP binding site.

It belongs to the pyruvate, phosphate/water dikinase regulatory protein family. PDRP subfamily.

The catalysed reaction is N(tele)-phospho-L-histidyl/L-threonyl-[pyruvate, phosphate dikinase] + ADP = N(tele)-phospho-L-histidyl/O-phospho-L-threonyl-[pyruvate, phosphate dikinase] + AMP + H(+). It carries out the reaction N(tele)-phospho-L-histidyl/O-phospho-L-threonyl-[pyruvate, phosphate dikinase] + phosphate + H(+) = N(tele)-phospho-L-histidyl/L-threonyl-[pyruvate, phosphate dikinase] + diphosphate. Functionally, bifunctional serine/threonine kinase and phosphorylase involved in the regulation of the pyruvate, phosphate dikinase (PPDK) by catalyzing its phosphorylation/dephosphorylation. This Geobacillus sp. (strain WCH70) protein is Putative pyruvate, phosphate dikinase regulatory protein.